The following is a 353-amino-acid chain: UPF0324 membrane protein PP_3661 (353 aa).

The next 8 membrane-spanning stretches (helical) occupy residues 20-42 (LNGI…MPAI), 70-92 (ASWA…AFFG), 105-127 (WSGL…WCGM), 137-159 (ALLT…ESAL), 166-188 (SAMA…PLAI), 234-253 (MTRV…WISR), 266-288 (IAMP…QVLP), and 326-348 (ALAT…TLGV).

Belongs to the UPF0324 family.

Its subcellular location is the cell membrane. The protein is UPF0324 membrane protein PP_3661 of Pseudomonas putida (strain ATCC 47054 / DSM 6125 / CFBP 8728 / NCIMB 11950 / KT2440).